Here is a 164-residue protein sequence, read N- to C-terminus: GTP-dependent dephospho-CoA kinase (164 aa).

GTP contacts are provided by Asp40, Val41, Val42, Asp59, Lys61, and Glu113.

This sequence belongs to the GTP-dependent DPCK family.

The catalysed reaction is 3'-dephospho-CoA + GTP = GDP + CoA + H(+). It functions in the pathway cofactor biosynthesis; coenzyme A biosynthesis. Functionally, catalyzes the GTP-dependent phosphorylation of the 3'-hydroxyl group of dephosphocoenzyme A to form coenzyme A (CoA). The polypeptide is GTP-dependent dephospho-CoA kinase (Sulfolobus acidocaldarius (strain ATCC 33909 / DSM 639 / JCM 8929 / NBRC 15157 / NCIMB 11770)).